A 57-amino-acid polypeptide reads, in one-letter code: MALFSKILIFYVIGVNISFVIIWFISHEKTHIRLLSAFLVGITWPMSLPVALLFSLF.

2 helical membrane-spanning segments follow: residues 7-27 and 37-57; these read ILIF…FISH and AFLV…FSLF.

Belongs to the GhoT/OrtT toxin family.

It localises to the cell inner membrane. Functionally, toxic component of a type V toxin-antitoxin (TA) system. Causes membrane damage when induced by MqsR, slowing cell growth and leading to the formation of dormant persister cells; involved with GhoS, its antitoxin, in reducing cell growth during antibacterial stress. Its toxic effects are neutralized by GhoS, which digests ghoT transcripts in a sequence-specific manner. The protein is Toxin GhoT of Escherichia coli O157:H7.